The chain runs to 502 residues: Cytochrome P450 2J2 (502 aa).

C448 is a binding site for heme.

Belongs to the cytochrome P450 family. It depends on heme as a cofactor. Highly expressed in heart, present at lower levels in liver, kidney and skeletal muscle (at protein level).

It is found in the endoplasmic reticulum membrane. The protein resides in the microsome membrane. It catalyses the reaction (5Z,8Z,11Z,14Z)-eicosatetraenoate + reduced [NADPH--hemoprotein reductase] + O2 = 5,6-epoxy-(8Z,11Z,14Z)-eicosatrienoate + oxidized [NADPH--hemoprotein reductase] + H2O + H(+). It carries out the reaction (5Z,8Z,11Z,14Z)-eicosatetraenoate + reduced [NADPH--hemoprotein reductase] + O2 = (8R,9S)-epoxy-(5Z,11Z,14Z)-eicosatrienoate + oxidized [NADPH--hemoprotein reductase] + H2O + H(+). The catalysed reaction is (5Z,8Z,11Z,14Z)-eicosatetraenoate + reduced [NADPH--hemoprotein reductase] + O2 = (8S,9R)-epoxy-(5Z,11Z,14Z)-eicosatrienoate + oxidized [NADPH--hemoprotein reductase] + H2O + H(+). The enzyme catalyses (5Z,8Z,11Z,14Z)-eicosatetraenoate + reduced [NADPH--hemoprotein reductase] + O2 = (11R,12S)-epoxy-(5Z,8Z,14Z)-eicosatrienoate + oxidized [NADPH--hemoprotein reductase] + H2O + H(+). It catalyses the reaction (5Z,8Z,11Z,14Z)-eicosatetraenoate + reduced [NADPH--hemoprotein reductase] + O2 = (11S,12R)-epoxy-(5Z,8Z,14Z)-eicosatrienoate + oxidized [NADPH--hemoprotein reductase] + H2O + H(+). It carries out the reaction (5Z,8Z,11Z,14Z)-eicosatetraenoate + reduced [NADPH--hemoprotein reductase] + O2 = (14R,15S)-epoxy-(5Z,8Z,11Z)-eicosatrienoate + oxidized [NADPH--hemoprotein reductase] + H2O + H(+). The catalysed reaction is (5Z,8Z,11Z,14Z)-eicosatetraenoate + reduced [NADPH--hemoprotein reductase] + O2 = (14S,15R)-epoxy-(5Z,8Z,11Z)-eicosatrienoate + oxidized [NADPH--hemoprotein reductase] + H2O + H(+). The enzyme catalyses (15S)-hydroperoxy-(5Z,8Z,11Z,13E)-eicosatetraenoate = (13S)-hydroxy-(14S,15S)-epoxy-(5Z,8Z,11Z)-eicosatrienoate. It catalyses the reaction (15S)-hydroperoxy-(5Z,8Z,11Z,13E)-eicosatetraenoate = (13R)-hydroxy-(14S,15S)-epoxy-(5Z,8Z,11Z)-eicosatrienoate. It carries out the reaction (5Z,8Z,11Z,14Z,17Z)-eicosapentaenoate + reduced [NADPH--hemoprotein reductase] + O2 = (17R,18S)-epoxy-(5Z,8Z,11Z,14Z)-eicosatetraenoate + oxidized [NADPH--hemoprotein reductase] + H2O + H(+). The catalysed reaction is (5Z,8Z,11Z,14Z,17Z)-eicosapentaenoate + reduced [NADPH--hemoprotein reductase] + O2 = (17S,18R)-epoxy-(5Z,8Z,11Z,14Z)-eicosatetraenoate + oxidized [NADPH--hemoprotein reductase] + H2O + H(+). The enzyme catalyses (4Z,7Z,10Z,13Z,16Z,19Z)-docosahexaenoate + reduced [NADPH--hemoprotein reductase] + O2 = (19R,20S)-epoxy-(4Z,7Z,10Z,13Z,16Z)-docosapentaenoate + oxidized [NADPH--hemoprotein reductase] + H2O + H(+). It catalyses the reaction (4Z,7Z,10Z,13Z,16Z,19Z)-docosahexaenoate + reduced [NADPH--hemoprotein reductase] + O2 = (19S,20R)-epoxy-(4Z,7Z,10Z,13Z,16Z)-docosapentaenoate + oxidized [NADPH--hemoprotein reductase] + H2O + H(+). It carries out the reaction albendazole + reduced [NADPH--hemoprotein reductase] + O2 = hydroxyalbendazole + oxidized [NADPH--hemoprotein reductase] + H2O + H(+). The catalysed reaction is albendazole + reduced [NADPH--hemoprotein reductase] + O2 = albendazole S-oxide + oxidized [NADPH--hemoprotein reductase] + H2O + H(+). The enzyme catalyses fenbendazole + reduced [NADPH--hemoprotein reductase] + O2 = fenbendazole S-oxide + oxidized [NADPH--hemoprotein reductase] + H2O + H(+). It functions in the pathway lipid metabolism; arachidonate metabolism. A cytochrome P450 monooxygenase involved in the metabolism of polyunsaturated fatty acids (PUFA) in the cardiovascular system. Mechanistically, uses molecular oxygen inserting one oxygen atom into a substrate, and reducing the second into a water molecule, with two electrons provided by NADPH via cytochrome P450 reductase (NADPH--hemoprotein reductase). Catalyzes the epoxidation of double bonds of PUFA. Converts arachidonic acid to four regioisomeric epoxyeicosatrienoic acids (EpETrE), likely playing a major role in the epoxidation of endogenous cardiac arachidonic acid pools. In endothelial cells, participates in eicosanoids metabolism by converting hydroperoxide species into hydroxy epoxy metabolites. In combination with 15-lipoxygenase metabolizes arachidonic acid and converts hydroperoxyicosatetraenoates (HpETEs) into hydroxy epoxy eicosatrienoates (HEETs), which are precursors of vasodilatory trihydroxyicosatrienoic acids (THETAs). This hydroperoxide isomerase activity is NADPH- and O2-independent. Catalyzes the monooxygenation of a various xenobiotics, such as danazol, amiodarone, terfenadine, astemizole, thioridazine, tamoxifen, cyclosporin A and nabumetone. Catalyzes hydroxylation of the anthelmintics albendazole and fenbendazole. Catalyzes the sulfoxidation of fenbedazole. The chain is Cytochrome P450 2J2 from Homo sapiens (Human).